Reading from the N-terminus, the 230-residue chain is CDP-diacylglycerol--inositol 3-phosphatidyltransferase (230 aa).

Residues 1–28 are Cytoplasmic-facing; the sequence is MPSAKSSDLSPTKTNLESTTKQKVSVQD. A helical membrane pass occupies residues 29–51; it reads IFLYIPNLIGYLRIITAIISFLC. Residues 52–57 are Lumenal-facing; that stretch reads MANHPV. A helical membrane pass occupies residues 58–77; the sequence is ATLIFYGISGFLDAFDGYAA. The Mg(2+) site is built by Asp70 and Asp73. 3 residues coordinate a CDP-1,2-diacyl-sn-glycerol: Gly74, Arg78, and Thr84. The Cytoplasmic segment spans residues 78 to 89; the sequence is RKFNQGTRFGAV. The helical transmembrane segment at 90–110 threads the bilayer; sequence LDMVTDRCATSSLIVYLGVLY. The Mg(2+) site is built by Asp91 and Asp95. Catalysis depends on Asp95, which acts as the Proton acceptor. Over 111 to 112 the chain is Lumenal; it reads PQ. Residues 113–133 traverse the membrane as a helical segment; that stretch reads YTVFWQILVSLDLSSHYMHMY. Topologically, residues 134–161 are cytoplasmic; sequence AMLSAGSTSHKNVDETQSKLLSLYYNNR. The chain crosses the membrane as a helical span at residues 162 to 182; sequence LVLFFVCLINELFYMAVYLHY. Residues 183 to 184 are Lumenal-facing; sequence YK. The chain crosses the membrane as a helical span at residues 185 to 205; sequence FFWLGTVMLVASTPIWLFKQI. The Cytoplasmic segment spans residues 206–230; it reads ANIIQLKNASLILARMDAHDHSKRD.

It belongs to the CDP-alcohol phosphatidyltransferase class-I family. Mn(2+) serves as cofactor. The cofactor is Mg(2+).

It localises to the endoplasmic reticulum membrane. It catalyses the reaction a CDP-1,2-diacyl-sn-glycerol + myo-inositol = a 1,2-diacyl-sn-glycero-3-phospho-(1D-myo-inositol) + CMP + H(+). Inhibited by calcium and zinc ions. Inhibited by nucleoside triphosphates and diphosphates. Catalyzes the synthesis of phosphatidylinositol (PtdIns). Required for proper membrane dynamics and cell wall integrity. This Candida albicans (strain SC5314 / ATCC MYA-2876) (Yeast) protein is CDP-diacylglycerol--inositol 3-phosphatidyltransferase.